Consider the following 244-residue polypeptide: MRTIKLILEYDGTNYAGWQLQPNGLSIQEVVEGALARLLKEPVRLRASGRTDAGVHARGMVAAFDTDRSIPLRAFSDGLNALLPPDIAVRSADEALPGFNPRFAATGKHYRYTIHRGERRSPLVRLQSWHVRGALNLAAMREAARHLTGERDFASFRTAGCAARTTIRRVDAVEISDDGEMLTVDVHGSGFLRNMVRIMVGTLVEVGRGKLTPEHVAQMVVCPGVVPAGPTAPPQGLCLQKVRF.

The active-site Nucleophile is the Asp-52. Substrate is bound at residue Tyr-110.

This sequence belongs to the tRNA pseudouridine synthase TruA family. As to quaternary structure, homodimer.

It catalyses the reaction uridine(38/39/40) in tRNA = pseudouridine(38/39/40) in tRNA. Formation of pseudouridine at positions 38, 39 and 40 in the anticodon stem and loop of transfer RNAs. The polypeptide is tRNA pseudouridine synthase A (Geobacter sulfurreducens (strain ATCC 51573 / DSM 12127 / PCA)).